Reading from the N-terminus, the 261-residue chain is Rhomboid-type serine protease 2 (261 aa).

Helical transmembrane passes span 17–37 (LTAG…VFPI), 58–78 (LYPL…SLFV), 94–114 (ITLN…GMLL), 116–136 (PNVY…YFAV), and 155–175 (LYIP…SSFV). The active-site Nucleophile is the S124. The active site involves H177.

Belongs to the peptidase S54 family.

It localises to the golgi apparatus membrane. The protein resides in the golgi apparatus. Its subcellular location is the cis-Golgi network membrane. The enzyme catalyses Cleaves type-1 transmembrane domains using a catalytic dyad composed of serine and histidine that are contributed by different transmembrane domains.. Its function is as follows. Probable rhomboid-type serine protease that catalyzes intramembrane proteolysis. This Eremothecium gossypii (strain ATCC 10895 / CBS 109.51 / FGSC 9923 / NRRL Y-1056) (Yeast) protein is Rhomboid-type serine protease 2 (RBD2).